We begin with the raw amino-acid sequence, 514 residues long: Membrane-bound lytic murein transglycosylase F (514 aa).

The first 30 residues, 1–30 (MKKLKINYLFIGILTLLLAAALWPSIPWFG), serve as a signal peptide directing secretion. Residues 31–269 (KTENHIAAIQ…RIEEKYLGHG (239 aa)) are non-LT domain. Residues 270 to 514 (DDFDYVDTRS…LFTPQKKEEK (245 aa)) form an LT domain region. The active site involves E314.

In the N-terminal section; belongs to the bacterial solute-binding protein 3 family. This sequence in the C-terminal section; belongs to the transglycosylase Slt family.

The protein resides in the cell outer membrane. It carries out the reaction Exolytic cleavage of the (1-&gt;4)-beta-glycosidic linkage between N-acetylmuramic acid (MurNAc) and N-acetylglucosamine (GlcNAc) residues in peptidoglycan, from either the reducing or the non-reducing ends of the peptidoglycan chains, with concomitant formation of a 1,6-anhydrobond in the MurNAc residue.. Functionally, murein-degrading enzyme that degrades murein glycan strands and insoluble, high-molecular weight murein sacculi, with the concomitant formation of a 1,6-anhydromuramoyl product. Lytic transglycosylases (LTs) play an integral role in the metabolism of the peptidoglycan (PG) sacculus. Their lytic action creates space within the PG sacculus to allow for its expansion as well as for the insertion of various structures such as secretion systems and flagella. This is Membrane-bound lytic murein transglycosylase F from Salmonella paratyphi A (strain ATCC 9150 / SARB42).